The following is a 363-amino-acid chain: Putative C-&gt;U-editing enzyme APOBEC-4 (363 aa).

Positions 61 to 177 constitute a CMP/dCMP-type deaminase domain; sequence PQTKHLTFYE…AWNREALRSL (117 aa). His93 is a binding site for Zn(2+). Glu95 functions as the Proton donor in the catalytic mechanism. 2 residues coordinate Zn(2+): Cys127 and Cys134.

It belongs to the cytidine and deoxycytidylate deaminase family. Requires Zn(2+) as cofactor.

Functionally, putative C to U editing enzyme whose physiological substrate is not yet known. The sequence is that of Putative C-&gt;U-editing enzyme APOBEC-4 (APOBEC4) from Macaca fascicularis (Crab-eating macaque).